The chain runs to 139 residues: Invertebrate-type lysozyme 3 (139 aa).

An N-terminal signal peptide occupies residues 1 to 18; the sequence is MFVKSLVFLTIAVAYASA. Positions 19–138 constitute an I-type lysozyme domain; the sequence is DCLHCICMRE…WNGIKSCCGC (120 aa). 7 disulfides stabilise this stretch: Cys20-Cys106, Cys23-Cys138, Cys25-Cys31, Cys36-Cys45, Cys58-Cys86, Cys76-Cys82, and Cys98-Cys120. Residue Glu28 is the Proton donor of the active site. The active-site Nucleophile is the Asp39. 51 to 57 lines the substrate pocket; sequence KLPYYED. Substrate is bound by residues Tyr90 and 113 to 115; that span reads HNG.

This sequence belongs to the glycosyl hydrolase 22 family. Type-I lysozyme subfamily. In terms of tissue distribution, expressed in pharynx grinder muscle pm7, isthmus marginal cell mc2 and pharyngeal muscle cell pm5, intestinal cells and at lower levels in coelomocytes and epidermis. Expressed at low levels in intestine.

It is found in the late endosome lumen. The protein localises to the recycling endosome lumen. Its subcellular location is the lysosome lumen. It localises to the secreted. The enzyme catalyses Hydrolysis of (1-&gt;4)-beta-linkages between N-acetylmuramic acid and N-acetyl-D-glucosamine residues in a peptidoglycan and between N-acetyl-D-glucosamine residues in chitodextrins.. In terms of biological role, has bacteriolytic activity against Gram-positive bacteria. Plays a role in defense against bacterial pathogens. Involved in pharyngeal grinder function by enabling proper lysis of ingested bacteria. This chain is Invertebrate-type lysozyme 3, found in Caenorhabditis elegans.